Consider the following 382-residue polypeptide: Mannitol-1-phosphate 5-dehydrogenase (382 aa).

Position 3 to 14 (3 to 14) interacts with NAD(+); that stretch reads ALHFGAGNIGRG.

This sequence belongs to the mannitol dehydrogenase family.

The enzyme catalyses D-mannitol 1-phosphate + NAD(+) = beta-D-fructose 6-phosphate + NADH + H(+). This is Mannitol-1-phosphate 5-dehydrogenase from Salmonella paratyphi A (strain ATCC 9150 / SARB42).